Here is a 366-residue protein sequence, read N- to C-terminus: Nitronate monooxygenase (366 aa).

FMN-binding positions include N74, Q181, G186, G223, and 242 to 245 (QLGT).

This sequence belongs to the nitronate monooxygenase family. NMO class I subfamily. FMN serves as cofactor.

The catalysed reaction is 3 propionate 3-nitronate + 3 O2 + H2O = 3 3-oxopropanoate + 2 nitrate + nitrite + H2O2 + 3 H(+). Functionally, nitronate monooxygenase that uses molecular oxygen to catalyze the oxidative denitrification of alkyl nitronates. Acts on propionate 3-nitronate (P3N), the presumed physiological substrate. Is likely involved in the degradation of P3N, that allows B.phytofirmans PsJN to grow on 3-nitropropionate/P3N as the sole source of nitrogen and carbon. Also probably functions in the detoxification of P3N, a metabolic poison produced by plants and fungi as a defense mechanism. Cannot oxidize nitroalkanes such as 3-nitropropionate, nitroethane, or 1-nitropropane. This Paraburkholderia phytofirmans (strain DSM 17436 / LMG 22146 / PsJN) (Burkholderia phytofirmans) protein is Nitronate monooxygenase.